Here is a 629-residue protein sequence, read N- to C-terminus: Forkhead box protein O (629 aa).

The residue at position 49 (T49) is a Phosphothreonine; by PKB/AKT1. Position 78 is a phosphoserine (S78). The segment at residues 98–204 (WGNLSYADLI…ETSRYEKRRG (107 aa)) is a DNA-binding region (fork-head). 5 disordered regions span residues 185-208 (KSVRRRAASMETSRYEKRRGRAKK), 220-274 (GLND…SPIR), 321-368 (QQQF…QTLQ), 394-417 (SPNSVTTTMSPAYPNSEPSSDSLN), and 563-597 (QHLQQQQQQHHQHQQQLLLNNNNNNNNNNSSNSSL). Phosphoserine; by PKB/AKT1 is present on S193. Polar residues-rich tracts occupy residues 224 to 233 (ATPSPSSSVS) and 259 to 268 (RASSNASSCG). S262 is subject to Phosphoserine; by PKB/AKT1. Residues S265, S266, and S271 each carry the phosphoserine modification. The span at 332-341 (SQPPPPPYQP) shows a compositional bias: pro residues. The segment covering 342–356 (PQLQQQQQQQPSYSL) has biased composition (low complexity). Over residues 394–403 (SPNSVTTTMS) the composition is skewed to polar residues.

Interacts with melt.

The protein resides in the cytoplasm. It localises to the nucleus. In terms of biological role, transcription factor involved in the regulation of the insulin signaling pathway. Consistently activates both the downstream target Thor\d4EBP and the feedback control target InR. Involved in negative regulation of the cell cycle, modulating cell growth and proliferation. In response to cellular stresses, such as nutrient deprivation or increased levels of reactive oxygen species, foxo is activated and inhibits growth through the action of target genes such as Thor. Foxo activated in the adult fat body can regulate lifespan in adults; an insulin peptide itself may function as one secondary messenger of insulin-regulated aging. Also regulates Lip4, homolog of human acid lipases, thereby acting as a key modulator of lipid metabolism by insulin signaling and integrates insulin responses to glucose and lipid homeostasis. This Drosophila persimilis (Fruit fly) protein is Forkhead box protein O.